The sequence spans 532 residues: Flavin-containing monooxygenase 3 (532 aa).

Residues 9 to 13 (GAGVS), E32, 40 to 41 (LW), and 61 to 62 (NS) each bind FAD. NADP(+)-binding positions include 60-61 (SN) and 195-198 (SGCD). S401 is modified (phosphoserine). Residues 510-530 (FFFHWLKLFAIPILLIAVFLV) form a helical membrane-spanning segment.

Belongs to the FMO family. It depends on FAD as a cofactor.

The protein localises to the microsome membrane. It is found in the endoplasmic reticulum membrane. It catalyses the reaction trimethylamine + NADPH + O2 = trimethylamine N-oxide + NADP(+) + H2O. The enzyme catalyses N,N-dimethylaniline + NADPH + O2 + H(+) = N,N-dimethylaniline N-oxide + NADP(+) + H2O. It carries out the reaction hypotaurine + NADPH + O2 + H(+) = taurine + NADP(+) + H2O. The catalysed reaction is (S)-nicotine + NADPH + O2 = trans-(S)-nicotine N(1')-oxide + NADP(+) + H2O. It catalyses the reaction albendazole + NADPH + O2 + H(+) = albendazole S-oxide + NADP(+) + H2O. Essential hepatic enzyme that catalyzes the oxygenation of a wide variety of nitrogen- and sulfur-containing compounds including drugs as well as dietary compounds. Plays an important role in the metabolism of trimethylamine (TMA), via the production of trimethylamine N-oxide (TMAO) metabolite. TMA is generated by the action of gut microbiota using dietary precursors such as choline, choline containing compounds, betaine or L-carnitine. By regulating TMAO concentration, FMO3 directly impacts both platelet responsiveness and rate of thrombus formation. The sequence is that of Flavin-containing monooxygenase 3 (FMO3) from Pan troglodytes (Chimpanzee).